Consider the following 466-residue polypeptide: Tetratricopeptide repeat protein 38 (466 aa).

TPR repeat units follow at residues 175 to 212 (MPLY…TPED), 251 to 284 (CHNY…RCVK), and 368 to 400 (LQIA…LKPI).

It belongs to the TTC38 family.

This is Tetratricopeptide repeat protein 38 (ttc38) from Danio rerio (Zebrafish).